The sequence spans 206 residues: MTAKPVLNRAHFFTSVAQFRDLPPSRAEVAFAGRSNAGKSSAINLLTRKNRLAFTSKTPGRTQLINFFELTADTYLVDLPGYGYAKVPPEVKAKWEGLLSRYLQEREALAGMVLIMDARHPLTPLDRQMLEWFAPTGKPVHILLSKADKLSNSEKALTLRKVKQELADRETVSVQLFSSLSRVGAEEAAVRIEGWLAPEAAVHAPG.

The region spanning 25–198 is the EngB-type G domain; it reads SRAEVAFAGR…AVRIEGWLAP (174 aa). Mg(2+) is bound by residues Ser40 and Thr62.

The protein belongs to the TRAFAC class TrmE-Era-EngA-EngB-Septin-like GTPase superfamily. EngB GTPase family. Requires Mg(2+) as cofactor.

Its function is as follows. Necessary for normal cell division and for the maintenance of normal septation. In Thiobacillus denitrificans (strain ATCC 25259 / T1), this protein is Probable GTP-binding protein EngB.